The following is a 289-amino-acid chain: ATP synthase gamma chain (289 aa).

The protein belongs to the ATPase gamma chain family. F-type ATPases have 2 components, CF(1) - the catalytic core - and CF(0) - the membrane proton channel. CF(1) has five subunits: alpha(3), beta(3), gamma(1), delta(1), epsilon(1). CF(0) has three main subunits: a, b and c.

It localises to the cell inner membrane. Its function is as follows. Produces ATP from ADP in the presence of a proton gradient across the membrane. The gamma chain is believed to be important in regulating ATPase activity and the flow of protons through the CF(0) complex. The chain is ATP synthase gamma chain from Erwinia tasmaniensis (strain DSM 17950 / CFBP 7177 / CIP 109463 / NCPPB 4357 / Et1/99).